The following is a 685-amino-acid chain: DEAD-box ATP-dependent RNA helicase 7 (685 aa).

Positions 1–89 (MPSISMMSDA…SELVQADDLK (89 aa)) are disordered. 2 stretches are compositionally biased toward basic and acidic residues: residues 22–42 (MKSE…SSSK) and 66–78 (AVDL…KSDN). The short motif at 107-135 (NSLSNFRISKPLKDVLISKGIKALFPIQA) is the Q motif element. A Helicase ATP-binding domain is found at 138 to 320 (FDNVIDGCDL…TRFLKSAKKT (183 aa)). An ATP-binding site is contributed by 151 to 158 (ARTGQGKT). The DEAD box signature appears at 266-269 (DEAD). The Helicase C-terminal domain occupies 349 to 491 (DLIPDIIRCY…LSAPQPVDVA (143 aa)).

The protein belongs to the DEAD box helicase family. DDX21/DDX50 subfamily.

Its subcellular location is the nucleus. It catalyses the reaction ATP + H2O = ADP + phosphate + H(+). This chain is DEAD-box ATP-dependent RNA helicase 7 (RH7), found in Spinacia oleracea (Spinach).